Here is a 1024-residue protein sequence, read N- to C-terminus: Carbamoyl phosphate synthase large chain (1024 aa).

Residues 1–396 are carboxyphosphate synthetic domain; sequence MDIKKILVIG…AWQKAVRMID (396 aa). 12 residues coordinate ATP: Arg125, Arg165, Gly171, Gly172, Lys204, Leu206, Glu211, Gly237, Val238, His239, Gln280, and Glu294. An ATP-grasp 1 domain is found at 129–323; that stretch reads QKAMREAGIP…LAYIAAKLAL (195 aa). Residues Gln280, Glu294, and Asn296 each coordinate Mg(2+). Mn(2+)-binding residues include Gln280, Glu294, and Asn296. Residues 397–536 form an oligomerization domain region; it reads IGEPGLVGGP…LTYGGQYDDK (140 aa). The tract at residues 536–917 is carbamoyl phosphate synthetic domain; that stretch reads KTPGVDYLVV…LKSWLSATPN (382 aa). Residues 660-849 enclose the ATP-grasp 2 domain; it reads SKLLDRLGIK…YMSLVADVLT (190 aa). 9 residues coordinate ATP: Arg696, Lys735, Glu742, Gly766, Val767, His768, Ser769, Gln809, and Glu820. Gln809, Glu820, and Asn822 together coordinate Mg(2+). The Mn(2+) site is built by Gln809, Glu820, and Asn822. In terms of domain architecture, MGS-like spans 917-1024; the sequence is NKIPSKTALI…KNGKLEVAPW (108 aa). The allosteric domain stretch occupies residues 918–1024; that stretch reads KIPSKTALIY…KNGKLEVAPW (107 aa).

Belongs to the CarB family. In terms of assembly, composed of two chains; the small (or glutamine) chain promotes the hydrolysis of glutamine to ammonia, which is used by the large (or ammonia) chain to synthesize carbamoyl phosphate. Tetramer of heterodimers (alpha,beta)4. It depends on Mg(2+) as a cofactor. Mn(2+) serves as cofactor.

The catalysed reaction is hydrogencarbonate + L-glutamine + 2 ATP + H2O = carbamoyl phosphate + L-glutamate + 2 ADP + phosphate + 2 H(+). The enzyme catalyses hydrogencarbonate + NH4(+) + 2 ATP = carbamoyl phosphate + 2 ADP + phosphate + 2 H(+). Its pathway is amino-acid biosynthesis; L-arginine biosynthesis; carbamoyl phosphate from bicarbonate: step 1/1. The protein operates within pyrimidine metabolism; UMP biosynthesis via de novo pathway; (S)-dihydroorotate from bicarbonate: step 1/3. Large subunit of the glutamine-dependent carbamoyl phosphate synthetase (CPSase). CPSase catalyzes the formation of carbamoyl phosphate from the ammonia moiety of glutamine, carbonate, and phosphate donated by ATP, constituting the first step of 2 biosynthetic pathways, one leading to arginine and/or urea and the other to pyrimidine nucleotides. The large subunit (synthetase) binds the substrates ammonia (free or transferred from glutamine from the small subunit), hydrogencarbonate and ATP and carries out an ATP-coupled ligase reaction, activating hydrogencarbonate by forming carboxy phosphate which reacts with ammonia to form carbamoyl phosphate. The protein is Carbamoyl phosphate synthase large chain of Pyrobaculum aerophilum (strain ATCC 51768 / DSM 7523 / JCM 9630 / CIP 104966 / NBRC 100827 / IM2).